We begin with the raw amino-acid sequence, 489 residues long: Virion host shutoff protein (489 aa).

Disordered stretches follow at residues 110–135, 142–161, 285–316, and 333–363; these read EEAS…AFSN, SLAS…PSAA, RSQT…GGTE, and YEDD…ILTP. Positions 124 to 134 are enriched in polar residues; it reads ITDSRPSSAFS.

Belongs to the herpesviridae VHS protein family. As to quaternary structure, interacts with human EIF4H, EIF4A1 and EIF4A2; interaction with eIF4AI and EIF4A2 presumably allows Vhs protein to associate with the eIF4F cap-binding complex.

It is found in the virion. Minor structural protein that acts as an endoribonuclease during lytic infection. Degrades host mRNAs in the cytoplasm by cutting them at preferred sites, including some in regions of translation initiation. Together with inhibition of host splicing by ICP27, contributes to an overall decrease in host protein synthesis. Also, after the onset of viral transcription, accelerates the turnover of viral mRNA, thereby facilitating the sequential expression of different classes of viral genes. Binds translation initiation factors eIF4H, eIF4AI, and eIF4AII, thereby may interact directly with the translation initiation complex and thus digest specifically mRNAs. Also impedes antigen presentation by major histocompatibility complex class I and class II molecules, inhibits secretion of cytokines that would otherwise recruit lymphocytes and neutrophils cells to the site of infection and blocks the activation of dendritic cells. Impedes the alpha/beta interferon-mediated response to infection by evading the cGAS/ STING-mediated DNA-sensing pathway and degrading CGAS via its RNase activity. The sequence is that of Virion host shutoff protein (UL41) from Human herpesvirus 1 (strain KOS) (HHV-1).